The chain runs to 190 residues: Elongation factor P-like protein (190 aa).

It belongs to the elongation factor P family.

The protein is Elongation factor P-like protein of Pseudoalteromonas atlantica (strain T6c / ATCC BAA-1087).